Here is an 82-residue protein sequence, read N- to C-terminus: Putative membrane protein insertion efficiency factor (82 aa).

It belongs to the UPF0161 family.

The protein localises to the cell inner membrane. Its function is as follows. Could be involved in insertion of integral membrane proteins into the membrane. The protein is Putative membrane protein insertion efficiency factor of Rickettsia africae (strain ESF-5).